The sequence spans 263 residues: MTRIDDTFRRLRAEGKKAFVAYIMAGDPDLETSLEVMKGLPGAGVDIIELGMPFTDPMADGPTIQTAGQRALEGGQTLARTLAMVREFRRGDASTPIVMMGYYNPIHARGVDRFLAEAQEAGIDGLIVVDLPPEEDAELCLPAQAAGLNFIRLATPTTDDRRLPKVLQNTSGFVYYVSITGITGAAAAQAVDVAPEVARLKAATDLPVIVGFGITSPEAARDIAGVADGCVVGSAIVKLVAEGRPVAEVLDRVAALAAGAHAA.

Active-site proton acceptor residues include E49 and D60.

Belongs to the TrpA family. In terms of assembly, tetramer of two alpha and two beta chains.

The catalysed reaction is (1S,2R)-1-C-(indol-3-yl)glycerol 3-phosphate + L-serine = D-glyceraldehyde 3-phosphate + L-tryptophan + H2O. The protein operates within amino-acid biosynthesis; L-tryptophan biosynthesis; L-tryptophan from chorismate: step 5/5. Functionally, the alpha subunit is responsible for the aldol cleavage of indoleglycerol phosphate to indole and glyceraldehyde 3-phosphate. The polypeptide is Tryptophan synthase alpha chain (Cereibacter sphaeroides (strain ATCC 17025 / ATH 2.4.3) (Rhodobacter sphaeroides)).